A 1024-amino-acid polypeptide reads, in one-letter code: Multidrug resistance protein MdtC (1024 aa).

12 consecutive transmembrane segments (helical) span residues 3 to 23 (FLSL…ALVL), 333 to 353 (EVEQ…FAFL), 360 to 380 (LIPA…MYLC), 387 to 407 (LSLM…IVVL), 431 to 451 (VGFT…PLLM), 463 to 483 (FAIT…TLTP), 528 to 548 (WALL…ISMP), 853 to 873 (LWLI…LYES), 875 to 895 (VHPL…LLAL), 897 to 917 (LFNT…IGIV), 953 to 973 (PIIM…LSSG), and 984 to 1004 (ITIV…TPVV).

Belongs to the resistance-nodulation-cell division (RND) (TC 2.A.6) family. MdtC subfamily. Part of a tripartite efflux system composed of MdtA, MdtB and MdtC. MdtC forms a heteromultimer with MdtB.

Its subcellular location is the cell inner membrane. In Erwinia amylovora (strain ATCC 49946 / CCPPB 0273 / Ea273 / 27-3), this protein is Multidrug resistance protein MdtC.